The chain runs to 469 residues: tRNA-2-methylthio-N(6)-dimethylallyladenosine synthase (469 aa).

Positions 22–142 constitute an MTTase N-terminal domain; it reads RKVFIKTYGC…LPEALRRAKE (121 aa). [4Fe-4S] cluster is bound by residues Cys-31, Cys-67, Cys-105, Cys-183, Cys-187, and Cys-190. In terms of domain architecture, Radical SAM core spans 169–401; the sequence is RARGVTAFLT…QALLLKQQQE (233 aa). In terms of domain architecture, TRAM spans 404 to 466; the sequence is ESCIGKEIDL…NNSLFAERAE (63 aa).

It belongs to the methylthiotransferase family. MiaB subfamily. As to quaternary structure, monomer. [4Fe-4S] cluster serves as cofactor.

It localises to the cytoplasm. The catalysed reaction is N(6)-dimethylallyladenosine(37) in tRNA + (sulfur carrier)-SH + AH2 + 2 S-adenosyl-L-methionine = 2-methylsulfanyl-N(6)-dimethylallyladenosine(37) in tRNA + (sulfur carrier)-H + 5'-deoxyadenosine + L-methionine + A + S-adenosyl-L-homocysteine + 2 H(+). Functionally, catalyzes the methylthiolation of N6-(dimethylallyl)adenosine (i(6)A), leading to the formation of 2-methylthio-N6-(dimethylallyl)adenosine (ms(2)i(6)A) at position 37 in tRNAs that read codons beginning with uridine. This Rhizobium leguminosarum bv. trifolii (strain WSM2304) protein is tRNA-2-methylthio-N(6)-dimethylallyladenosine synthase.